Reading from the N-terminus, the 360-residue chain is Phenylalanine--tRNA ligase alpha subunit (360 aa).

Glu260 provides a ligand contact to Mg(2+).

Belongs to the class-II aminoacyl-tRNA synthetase family. Phe-tRNA synthetase alpha subunit type 1 subfamily. Tetramer of two alpha and two beta subunits. It depends on Mg(2+) as a cofactor.

It is found in the cytoplasm. It catalyses the reaction tRNA(Phe) + L-phenylalanine + ATP = L-phenylalanyl-tRNA(Phe) + AMP + diphosphate + H(+). The polypeptide is Phenylalanine--tRNA ligase alpha subunit (Paracoccus denitrificans (strain Pd 1222)).